The following is a 363-amino-acid chain: S-adenosylmethionine:tRNA ribosyltransferase-isomerase (363 aa).

This sequence belongs to the QueA family. As to quaternary structure, monomer.

The protein localises to the cytoplasm. The enzyme catalyses 7-aminomethyl-7-carbaguanosine(34) in tRNA + S-adenosyl-L-methionine = epoxyqueuosine(34) in tRNA + adenine + L-methionine + 2 H(+). It participates in tRNA modification; tRNA-queuosine biosynthesis. Transfers and isomerizes the ribose moiety from AdoMet to the 7-aminomethyl group of 7-deazaguanine (preQ1-tRNA) to give epoxyqueuosine (oQ-tRNA). The polypeptide is S-adenosylmethionine:tRNA ribosyltransferase-isomerase (Haemophilus influenzae (strain PittGG)).